Reading from the N-terminus, the 695-residue chain is Nucleoprotein (695 aa).

2 coiled-coil regions span residues 316-341 and 372-400; these read VNVG…RRHE and QTLA…EDQG. 2 disordered regions span residues 426–458 and 472–611; these read RSIN…SFVD and TLEN…EDTR. The segment covering 474 to 484 has biased composition (polar residues); the sequence is ENSVMAPSTTL. Residues 502-516 show a composition bias toward basic and acidic residues; that stretch reads ISQKKQGNESTDPAR. The segment covering 529 to 547 has biased composition (acidic residues); that stretch reads QEDDESEYTTDSQESDDQP. The PTAP/PSAP motif signature appears at 603-606; it reads PSAP.

Belongs to the filoviruses nucleoprotein family. Homooligomer. Homomultimerizes to form the nucleocapsid. Binds to viral genomic RNA. Interacts with VP35 and VP30 to form the nucleocapsid. Also interacts with VP24 and VP40. Post-translationally, phosphorylated.

The protein localises to the virion. It localises to the host cytoplasm. Functionally, encapsidates the genome, protecting it from nucleases. The encapsidated genomic RNA is termed the nucleocapsid and serves as template for transcription and replication. During replication, encapsidation by NP is coupled to RNA synthesis and all replicative products are resistant to nucleases. The polypeptide is Nucleoprotein (NP) (Lake Victoria marburgvirus (strain Ravn-87) (MARV)).